Reading from the N-terminus, the 239-residue chain is 1-(5-phosphoribosyl)-5-[(5-phosphoribosylamino)methylideneamino] imidazole-4-carboxamide isomerase (239 aa).

The active-site Proton acceptor is the Asp-8. Asp-129 (proton donor) is an active-site residue.

This sequence belongs to the HisA/HisF family.

It is found in the cytoplasm. It catalyses the reaction 1-(5-phospho-beta-D-ribosyl)-5-[(5-phospho-beta-D-ribosylamino)methylideneamino]imidazole-4-carboxamide = 5-[(5-phospho-1-deoxy-D-ribulos-1-ylimino)methylamino]-1-(5-phospho-beta-D-ribosyl)imidazole-4-carboxamide. It functions in the pathway amino-acid biosynthesis; L-histidine biosynthesis; L-histidine from 5-phospho-alpha-D-ribose 1-diphosphate: step 4/9. The sequence is that of 1-(5-phosphoribosyl)-5-[(5-phosphoribosylamino)methylideneamino] imidazole-4-carboxamide isomerase from Bacillus cereus (strain AH820).